Consider the following 219-residue polypeptide: Glutathione S-transferase (219 aa).

Residues 2 to 89 enclose the GST N-terminal domain; sequence SQPILGYWDI…YLGRKYKLNG (88 aa). Glutathione-binding positions include 8 to 9, 44 to 47, Lys51, 60 to 61, and 73 to 74; these read YW, RSEW, NL, and QT. In terms of domain architecture, GST C-terminal spans 91-207; the sequence is NDHEEIRISM…YIKKQQPKTF (117 aa). Substrate is bound at residue Tyr117.

The protein belongs to the GST superfamily. Mu family. In terms of assembly, homodimer.

The protein localises to the cytoplasm. It carries out the reaction RX + glutathione = an S-substituted glutathione + a halide anion + H(+). In Dermatophagoides pteronyssinus (European house dust mite), this protein is Glutathione S-transferase.